Consider the following 323-residue polypeptide: Lipoyl synthase (323 aa).

[4Fe-4S] cluster contacts are provided by C56, C61, C67, C82, C86, C89, and S293. A Radical SAM core domain is found at 68–282; it reads WEDREATFLI…AAEARELGFA (215 aa).

This sequence belongs to the radical SAM superfamily. Lipoyl synthase family. It depends on [4Fe-4S] cluster as a cofactor.

The protein localises to the cytoplasm. The enzyme catalyses [[Fe-S] cluster scaffold protein carrying a second [4Fe-4S](2+) cluster] + N(6)-octanoyl-L-lysyl-[protein] + 2 oxidized [2Fe-2S]-[ferredoxin] + 2 S-adenosyl-L-methionine + 4 H(+) = [[Fe-S] cluster scaffold protein] + N(6)-[(R)-dihydrolipoyl]-L-lysyl-[protein] + 4 Fe(3+) + 2 hydrogen sulfide + 2 5'-deoxyadenosine + 2 L-methionine + 2 reduced [2Fe-2S]-[ferredoxin]. The protein operates within protein modification; protein lipoylation via endogenous pathway; protein N(6)-(lipoyl)lysine from octanoyl-[acyl-carrier-protein]: step 2/2. In terms of biological role, catalyzes the radical-mediated insertion of two sulfur atoms into the C-6 and C-8 positions of the octanoyl moiety bound to the lipoyl domains of lipoate-dependent enzymes, thereby converting the octanoylated domains into lipoylated derivatives. This Acidothermus cellulolyticus (strain ATCC 43068 / DSM 8971 / 11B) protein is Lipoyl synthase.